The sequence spans 184 residues: CASP-like protein 1U1 (184 aa).

Residues 1–30 (MSSTGTTLSASEGDKGFRNGAAPAKSKSHS) lie on the Cytoplasmic side of the membrane. The helical transmembrane segment at 31 to 51 (TIALLRLLAFAATLSAFVTMI) threads the bilayer. Residues 52 to 76 (TNKQKITIGPFTRWSKWHYSDAFMW) are Extracellular-facing. A helical transmembrane segment spans residues 77–97 (FVVANCIAFIYLLFAAILGLI). At 98–111 (SHSPMLVKHLVILD) the chain is on the cytoplasmic side. Residues 112–132 (LIVSYMLFSAASAATAVAYIG) form a helical membrane-spanning segment. Residues 133–154 (KNGISQPGWTAICGVFERYCHH) lie on the Extracellular side of the membrane. Residues 155 to 175 (VAGALVACFLGWLFLTIAVFL) form a helical membrane-spanning segment. The Cytoplasmic portion of the chain corresponds to 176–184 (GMRRSPAAV).

The protein belongs to the Casparian strip membrane proteins (CASP) family. Homodimer and heterodimers.

The protein resides in the cell membrane. The protein is CASP-like protein 1U1 of Marchantia polymorpha (Common liverwort).